A 1350-amino-acid chain; its full sequence is Protein transport protein SEC16A homolog (1350 aa).

Disordered stretches follow at residues 26–45 (YTPTASSSAKELKFDDGSDS), 73–97 (LGNDVANEGTSGSVGKEEPSSSIAP), 964–1063 (MPPP…TRKV), 1118–1216 (AEEA…KPPI), and 1235–1350 (QVME…EVEL). Positions 35-45 (KELKFDDGSDS) are enriched in basic and acidic residues. S43 is modified (phosphoserine). Residues 970 to 1002 (HSTTGNPQVNEYQHQQQEAAKLSYSQSANTMSS) are compositionally biased toward polar residues. Over residues 1150–1168 (SPSSGSWSSGSPTPSENSP) the composition is skewed to low complexity. Composition is skewed to polar residues over residues 1195–1210 (TYNQGSSSMYQSPPVQ) and 1289–1316 (RSGSGTSLNGDLPQSVSRRTASWSGSVN). The segment covering 1317-1343 (SSSFMSPTSASTFRPSPLNSSSSSLGE) has biased composition (low complexity).

This sequence belongs to the SEC16 family. Interacts with SEC13A, SEC13B and SEC31A.

Its subcellular location is the golgi apparatus. The protein resides in the golgi stack. It is found in the endoplasmic reticulum. Required for efficient protein export from the endoplasmic reticulum (ER) to the Golgi by regulating COPII coat dynamics at the ER. Functions as a scaffold and regulator of COPII coat assembly at ER exit sites. The chain is Protein transport protein SEC16A homolog from Arabidopsis thaliana (Mouse-ear cress).